Consider the following 67-residue polypeptide: MIEVVCNDRLGNKVRVKVNSDDTIGDLKKVLSAQIGIKAEKIRLQKSYSIFKDHEIHDGDGLELYYN.

One can recognise a Ubiquitin-like domain in the interval 2–67; sequence IEVVCNDRLG…DGDGLELYYN (66 aa).

It localises to the cytoplasm. In Dictyostelium discoideum (Social amoeba), this protein is Ubiquitin-like protein 5 (ubl5).